The following is a 198-amino-acid chain: MRFDGGQAGWRETPRPGCTLDQRDWLTRGGSLTAHLARLGRVNVRVTREAVDCPWFDEPDAVASAPRAPMWVREVILSVDGTPYVAAHSIAPLAASKGVWQAMRRLRTRPLAELLYSDPQVERSALVSRRVIAGHPLYALATHALGGARAPHSFAARRSVFQRHGKPLMVTECMLPALWRHLDAHGDGPRSGGPGGGA.

3 residues coordinate substrate: Arg73, Leu111, and Glu172.

The protein belongs to the UbiC family.

The protein resides in the cytoplasm. The enzyme catalyses chorismate = 4-hydroxybenzoate + pyruvate. It participates in cofactor biosynthesis; ubiquinone biosynthesis. Functionally, removes the pyruvyl group from chorismate, with concomitant aromatization of the ring, to provide 4-hydroxybenzoate (4HB) for the ubiquinone pathway. This is Probable chorismate pyruvate-lyase from Burkholderia lata (strain ATCC 17760 / DSM 23089 / LMG 22485 / NCIMB 9086 / R18194 / 383).